Consider the following 386-residue polypeptide: Delta(7)-sterol 5(6)-desaturase (386 aa).

Transmembrane regions (helical) follow at residues 119–139, 172–192, and 206–226; these read VLSLFIITTLFGWLLYFIVAY, IPVMVLLTIPFFLLELHGYSF, and AILWQIPKFILFTDCGIYFLH. A Fatty acid hydroxylase domain is found at 214–337; that stretch reads FILFTDCGIY…FTTLWDRLGN (124 aa). A Histidine box-1 motif is present at residues 226-230; the sequence is HRWLH. The Histidine box-2 motif lies at 239 to 243; it reads HKPHH. The helical transmembrane segment at 272-292 threads the bilayer; that stretch reads PLLFPLHKVLYLLLFTFVNFW. Residues 314-318 carry the Histidine box-3 motif; the sequence is HTVHH.

Belongs to the sterol desaturase family. The cofactor is Fe cation.

The protein localises to the endoplasmic reticulum membrane. It carries out the reaction a Delta(7)-sterol + 2 Fe(II)-[cytochrome b5] + O2 + 2 H(+) = a Delta(5),Delta(7)-sterol + 2 Fe(III)-[cytochrome b5] + 2 H2O. The protein operates within steroid metabolism; ergosterol biosynthesis; ergosterol from zymosterol: step 3/5. Catalyzes the introduction of a C-5 double bond in the B ring of ergosterol. May contribute to the regulation of ergosterol biosynthesis. This is Delta(7)-sterol 5(6)-desaturase (ERG3) from Candida dubliniensis (strain CD36 / ATCC MYA-646 / CBS 7987 / NCPF 3949 / NRRL Y-17841) (Yeast).